Reading from the N-terminus, the 434-residue chain is Glutamate-1-semialdehyde 2,1-aminomutase 2 (434 aa).

Lys-270 bears the N6-(pyridoxal phosphate)lysine mark.

The protein belongs to the class-III pyridoxal-phosphate-dependent aminotransferase family. HemL subfamily. As to quaternary structure, homodimer. The cofactor is pyridoxal 5'-phosphate.

Its subcellular location is the cytoplasm. It carries out the reaction (S)-4-amino-5-oxopentanoate = 5-aminolevulinate. It functions in the pathway porphyrin-containing compound metabolism; protoporphyrin-IX biosynthesis; 5-aminolevulinate from L-glutamyl-tRNA(Glu): step 2/2. In Bacillus cereus (strain G9842), this protein is Glutamate-1-semialdehyde 2,1-aminomutase 2.